The chain runs to 78 residues: Esculentin-2Vb (78 aa).

The signal sequence occupies residues 1–22; sequence MFTMKKSLLLLFFLGTISLSLC. Residues 23–39 constitute a propeptide that is removed on maturation; sequence EEERGADEEEGDGEKLM. An intrachain disulfide couples Cys72 to Cys78.

In terms of tissue distribution, expressed by the skin glands.

The protein resides in the secreted. Its function is as follows. Antimicrobial peptide. The polypeptide is Esculentin-2Vb (Odorrana versabilis (Chinese bamboo leaf odorous frog)).